Here is a 277-residue protein sequence, read N- to C-terminus: Protein OPG166 (277 aa).

Residues Asn-29 and Asn-58 are each glycosylated (N-linked (GlcNAc...) asparagine; by host). 5 helical membrane-spanning segments follow: residues 124 to 144, 156 to 176, 186 to 206, 219 to 239, and 247 to 267; these read TMLMFIFTGITLFLLFLEITY, GILQVFGCVIAMIELCGAFLF, IIGLLMMTLPSIFLIITKVFS, LIIYYQLAGYILTVLGLGLSL, and LLLSGLGTIMVSEHFSLLFLV.

The protein belongs to the orthopoxvirus OPG166 protein family.

The protein resides in the host membrane. In terms of biological role, promotes, when overexpressed, the influx of extracellular Ca(2+), leading to membrane permeability and host cell necrosis. The chain is Protein OPG166 (OPG166) from Vaccinia virus (strain Copenhagen) (VACV).